The chain runs to 340 residues: HTH-type transcriptional regulator VirS (340 aa).

Positions 236 to 334 constitute an HTH araC/xylS-type domain; sequence ERVVGLARRL…GMTPRQYRAY (99 aa). 2 consecutive DNA-binding regions (H-T-H motif) follow at residues 254–275 and 301–324; these read EAIA…AAEG and LSQI…RRWF.

In terms of processing, phosphorylated by PknK. Phosphorylation increases affinity for the mymA promoter.

Its function is as follows. Regulates the expression of the mymA operon. This Mycobacterium tuberculosis (strain CDC 1551 / Oshkosh) protein is HTH-type transcriptional regulator VirS (virS).